Here is a 646-residue protein sequence, read N- to C-terminus: Hexon protein p72 (646 aa).

Belongs to the NCLDV major capsid protein family. Homotrimer. The membrane-bound form, but not the cytosolic one, assembles into large complexes. Interacts with the minor capsid proteins M1249L and p17; these interactions form a rigid zipper structure that stabilizes the capsomers.

The protein resides in the virion. The protein localises to the host endoplasmic reticulum membrane. Its subcellular location is the host cytoplasm. It is found in the host cytosol. Its function is as follows. Capsid protein that self-assembles to form the pseudo-hexameric capsomers of the icosahedral capsid. The capsid is constructed of 2760 pseudo-hexameric capsomers and 12 pentameric capsomers, with a T=277 symmetry, about 200 nm in diameter. The capsid encapsulates the DNA-containing nucleoid, the core shell and the inner membrane. Plays an essential role in virion assembly. Involved in virus attachment to the host cell. This Ornithodoros (relapsing fever ticks) protein is Hexon protein p72.